A 360-amino-acid chain; its full sequence is Chorismate synthase (360 aa).

Residues arginine 48 and arginine 54 each coordinate NADP(+). FMN-binding positions include 125–127, 246–247, glycine 286, 301–305, and arginine 327; these read RSS, NA, and KPTSS.

Belongs to the chorismate synthase family. In terms of assembly, homotetramer. FMNH2 serves as cofactor.

It catalyses the reaction 5-O-(1-carboxyvinyl)-3-phosphoshikimate = chorismate + phosphate. It participates in metabolic intermediate biosynthesis; chorismate biosynthesis; chorismate from D-erythrose 4-phosphate and phosphoenolpyruvate: step 7/7. Its function is as follows. Catalyzes the anti-1,4-elimination of the C-3 phosphate and the C-6 proR hydrogen from 5-enolpyruvylshikimate-3-phosphate (EPSP) to yield chorismate, which is the branch point compound that serves as the starting substrate for the three terminal pathways of aromatic amino acid biosynthesis. This reaction introduces a second double bond into the aromatic ring system. This Haemophilus ducreyi (strain 35000HP / ATCC 700724) protein is Chorismate synthase.